The following is a 282-amino-acid chain: 4-diphosphocytidyl-2-C-methyl-D-erythritol kinase (282 aa).

K9 is a catalytic residue. 98 to 108 (PMGGGLGGGSS) contributes to the ATP binding site. The active site involves D140.

This sequence belongs to the GHMP kinase family. IspE subfamily. As to quaternary structure, homodimer.

It catalyses the reaction 4-CDP-2-C-methyl-D-erythritol + ATP = 4-CDP-2-C-methyl-D-erythritol 2-phosphate + ADP + H(+). It functions in the pathway isoprenoid biosynthesis; isopentenyl diphosphate biosynthesis via DXP pathway; isopentenyl diphosphate from 1-deoxy-D-xylulose 5-phosphate: step 3/6. In terms of biological role, catalyzes the phosphorylation of the position 2 hydroxy group of 4-diphosphocytidyl-2C-methyl-D-erythritol. This is 4-diphosphocytidyl-2-C-methyl-D-erythritol kinase from Salmonella heidelberg (strain SL476).